We begin with the raw amino-acid sequence, 212 residues long: MVESVVKNWQGEQVGETTFELRVAKEETASHIVHRALVRQLTNARQGNASTKTRAEVRGGGRKPWRQKGTGRARAGSIRSPLWRGGGVIFGPKPRDFDLKLNRKERRLALRTAFVGRIDDLIVVEEFSTELSRPKTKDLVAALARWGVVPESKALLILSEIADTDNVYLSARNIENLKLIAANQLNVFDLLHADKIVVTASALEKIQEVYSA.

Residues 45–71 (RQGNASTKTRAEVRGGGRKPWRQKGTG) form a disordered region. Residues 60–71 (GGRKPWRQKGTG) are compositionally biased toward basic residues.

The protein belongs to the universal ribosomal protein uL4 family. As to quaternary structure, part of the 50S ribosomal subunit.

In terms of biological role, one of the primary rRNA binding proteins, this protein initially binds near the 5'-end of the 23S rRNA. It is important during the early stages of 50S assembly. It makes multiple contacts with different domains of the 23S rRNA in the assembled 50S subunit and ribosome. Functionally, forms part of the polypeptide exit tunnel. This is Large ribosomal subunit protein uL4 from Nostoc punctiforme (strain ATCC 29133 / PCC 73102).